The primary structure comprises 557 residues: Anthrax toxin receptor-like (557 aa).

A signal peptide spans 1-25 (MRSHGRWGPCFLLFLLLLPPPLFRA). Over 26-345 (GSLRYHGPGW…KSNVSVTSST (320 aa)) the chain is Extracellular. One can recognise a VWFA domain in the interval 74–244 (DLYFILDKSG…KAMRDTVDAL (171 aa)). 3 residues coordinate a divalent metal cation: serine 82, serine 84, and threonine 148. A helical transmembrane segment spans residues 346–366 (CGIFSNWLYFLLPLLLLPLLL). Residues 367-557 (CCLWRLCRKK…PTSKAPNTQD (191 aa)) lie on the Cytoplasmic side of the membrane. 2 disordered regions span residues 380 to 411 (EPPP…LPPP) and 497 to 557 (ESPS…NTQD). Positions 386 to 395 (KPEKEPEQEK) are enriched in basic and acidic residues. Over residues 396 to 411 (PPPPPPPSPPPPLPPP) the composition is skewed to pro residues. Over residues 534–557 (GTLQNPLCPSLPRSPTSKAPNTQD) the composition is skewed to polar residues.

It belongs to the ATR family.

It is found in the membrane. This is Anthrax toxin receptor-like (ANTXRL) from Macaca fascicularis (Crab-eating macaque).